Consider the following 376-residue polypeptide: Chaperone protein DnaJ (376 aa).

Positions Asp-5–Gly-69 constitute a J domain. The segment at Gly-133 to Thr-215 adopts a CR-type zinc-finger fold. 8 residues coordinate Zn(2+): Cys-146, Cys-149, Cys-163, Cys-166, Cys-189, Cys-192, Cys-203, and Cys-206. CXXCXGXG motif repeat units follow at residues Cys-146 to Gly-153, Cys-163 to Gly-170, Cys-189 to Gly-196, and Cys-203 to Gly-210.

Belongs to the DnaJ family. Homodimer. Zn(2+) is required as a cofactor.

The protein localises to the cytoplasm. Functionally, participates actively in the response to hyperosmotic and heat shock by preventing the aggregation of stress-denatured proteins and by disaggregating proteins, also in an autonomous, DnaK-independent fashion. Unfolded proteins bind initially to DnaJ; upon interaction with the DnaJ-bound protein, DnaK hydrolyzes its bound ATP, resulting in the formation of a stable complex. GrpE releases ADP from DnaK; ATP binding to DnaK triggers the release of the substrate protein, thus completing the reaction cycle. Several rounds of ATP-dependent interactions between DnaJ, DnaK and GrpE are required for fully efficient folding. Also involved, together with DnaK and GrpE, in the DNA replication of plasmids through activation of initiation proteins. This chain is Chaperone protein DnaJ, found in Listeria welshimeri serovar 6b (strain ATCC 35897 / DSM 20650 / CCUG 15529 / CIP 8149 / NCTC 11857 / SLCC 5334 / V8).